Consider the following 293-residue polypeptide: Elongation factor Ts (293 aa).

An involved in Mg(2+) ion dislocation from EF-Tu region spans residues 79–82 (TDFV).

Belongs to the EF-Ts family.

It is found in the cytoplasm. In terms of biological role, associates with the EF-Tu.GDP complex and induces the exchange of GDP to GTP. It remains bound to the aminoacyl-tRNA.EF-Tu.GTP complex up to the GTP hydrolysis stage on the ribosome. The chain is Elongation factor Ts from Macrococcus caseolyticus (strain JCSC5402) (Macrococcoides caseolyticum).